Reading from the N-terminus, the 254-residue chain is Hydroxypyruvate/pyruvate aldolase (254 aa).

Residue H47 is the Proton acceptor of the active site. A divalent metal cation is bound by residues E151 and D177.

The protein belongs to the HpcH/HpaI aldolase family. A divalent metal cation is required as a cofactor.

The catalysed reaction is D-glyceraldehyde + pyruvate = 2-dehydro-3-deoxy-L-galactonate. Aldolase which can catalyze in vitro the aldolisation reaction between hydroxypyruvate (HPA) or pyruvate (PA) and D-glyceraldehyde (D-GA). The condensation of pyruvate and D-glyceraldehyde produces 2-dehydro-3-deoxy-L-galactonate as the major product. Has weak activity with hydroxypyruvate and D-glyceraldehyde. This is Hydroxypyruvate/pyruvate aldolase from Chromohalobacter salexigens (strain ATCC BAA-138 / DSM 3043 / CIP 106854 / NCIMB 13768 / 1H11).